Here is an 89-residue protein sequence, read N- to C-terminus: Small ribosomal subunit protein uS17 (89 aa).

The protein belongs to the universal ribosomal protein uS17 family. In terms of assembly, part of the 30S ribosomal subunit.

Functionally, one of the primary rRNA binding proteins, it binds specifically to the 5'-end of 16S ribosomal RNA. The polypeptide is Small ribosomal subunit protein uS17 (Phytoplasma mali (strain AT)).